The following is a 344-amino-acid chain: Ribosomal RNA large subunit methyltransferase Cfr (344 aa).

Glu88 functions as the Proton acceptor in the catalytic mechanism. In terms of domain architecture, Radical SAM core spans 95–324; that stretch reads KKGWESFCIS…HANGISVATR (230 aa). A disulfide bridge links Cys102 with Cys335. [4Fe-4S] cluster contacts are provided by Cys109, Cys113, and Cys116. S-adenosyl-L-methionine is bound by residues 155–156, Ser186, 209–211, and Asn290; these read GE and SLH. The active-site S-methylcysteine intermediate is the Cys335.

It belongs to the radical SAM superfamily. RlmN family. Cfr subfamily. [4Fe-4S] cluster serves as cofactor.

The protein localises to the cytoplasm. The catalysed reaction is adenosine(2503) in 23S rRNA + 2 reduced [2Fe-2S]-[ferredoxin] + 2 S-adenosyl-L-methionine = 8-methyladenosine(2503) in 23S rRNA + 5'-deoxyadenosine + L-methionine + 2 oxidized [2Fe-2S]-[ferredoxin] + S-adenosyl-L-homocysteine. In terms of biological role, specifically methylates position 8 of adenine 2503 in 23S rRNA. Confers resistance to some classes of antibiotics. The protein is Ribosomal RNA large subunit methyltransferase Cfr of Lachnoclostridium phytofermentans (strain ATCC 700394 / DSM 18823 / ISDg) (Clostridium phytofermentans).